The chain runs to 346 residues: Methylthioribose-1-phosphate isomerase (346 aa).

Substrate-binding positions include 48-50, Arg-91, and Gln-196; that span reads RGA. The active-site Proton donor is Asp-237. 247–248 serves as a coordination point for substrate; sequence NK.

Belongs to the eIF-2B alpha/beta/delta subunits family. MtnA subfamily.

It catalyses the reaction 5-(methylsulfanyl)-alpha-D-ribose 1-phosphate = 5-(methylsulfanyl)-D-ribulose 1-phosphate. It participates in amino-acid biosynthesis; L-methionine biosynthesis via salvage pathway; L-methionine from S-methyl-5-thio-alpha-D-ribose 1-phosphate: step 1/6. Its function is as follows. Catalyzes the interconversion of methylthioribose-1-phosphate (MTR-1-P) into methylthioribulose-1-phosphate (MTRu-1-P). This is Methylthioribose-1-phosphate isomerase from Thermosipho africanus (strain TCF52B).